Consider the following 698-residue polypeptide: Endogenous retrovirus group K member 9 Env polyprotein (698 aa).

The disordered stretch occupies residues M1–P47. A signal peptide spans M1–S89. Over residues A10–R20 the composition is skewed to basic residues. Residues L90–T631 lie on the Extracellular side of the membrane. Residues N100, N128, N153, N273, N354, N371, and N460 are each glycosylated (N-linked (GlcNAc...) asparagine). Residues F465–V485 are fusion peptide. Residues N506, N553, N565, and N584 are each glycosylated (N-linked (GlcNAc...) asparagine). A helical membrane pass occupies residues I632–L652. The Cytoplasmic portion of the chain corresponds to V653–V698.

Belongs to the beta type-B retroviral envelope protein family. HERV class-II K(HML-2) env subfamily. As to quaternary structure, the surface (SU) and transmembrane (TM) proteins form a heterodimer. SU and TM are attached by noncovalent interactions or by a labile interchain disulfide bond. Specific enzymatic cleavages in vivo yield the mature SU and TM proteins.

Its subcellular location is the cell membrane. It is found in the virion. Functionally, retroviral envelope proteins mediate receptor recognition and membrane fusion during early infection. Endogenous envelope proteins may have kept, lost or modified their original function during evolution. This endogenous envelope protein has lost its original fusogenic properties. Its function is as follows. SU mediates receptor recognition. TM anchors the envelope heterodimer to the viral membrane through one transmembrane domain. The other hydrophobic domain, called fusion peptide, mediates fusion of the viral membrane with the target cell membrane. This Homo sapiens (Human) protein is Endogenous retrovirus group K member 9 Env polyprotein (ERVK-9).